A 124-amino-acid polypeptide reads, in one-letter code: Small ribosomal subunit protein uS12 (124 aa).

Asp-89 is subject to 3-methylthioaspartic acid. The segment at 104-124 (TDGVENRKQSRSKYGTKRPKK) is disordered. Basic residues predominate over residues 112 to 124 (QSRSKYGTKRPKK).

The protein belongs to the universal ribosomal protein uS12 family. In terms of assembly, part of the 30S ribosomal subunit. Contacts proteins S8 and S17. May interact with IF1 in the 30S initiation complex.

Functionally, with S4 and S5 plays an important role in translational accuracy. Interacts with and stabilizes bases of the 16S rRNA that are involved in tRNA selection in the A site and with the mRNA backbone. Located at the interface of the 30S and 50S subunits, it traverses the body of the 30S subunit contacting proteins on the other side and probably holding the rRNA structure together. The combined cluster of proteins S8, S12 and S17 appears to hold together the shoulder and platform of the 30S subunit. The protein is Small ribosomal subunit protein uS12 of Thermosipho melanesiensis (strain DSM 12029 / CIP 104789 / BI429).